The chain runs to 219 residues: AA11 family lytic polysaccharide monooxygenase A (219 aa).

An N-terminal signal peptide occupies residues 1–18; it reads MMLSKVVMGLLTASLAAA. H19 lines the Cu(+) pocket. 3 disulfide bridges follow: C58–C154, C94–C116, and C185–C218. Residue N80 is glycosylated (N-linked (GlcNAc...) asparagine). H89 contributes to the Cu(+) binding site.

This sequence belongs to the polysaccharide monooxygenase AA11 family. It depends on Cu(2+) as a cofactor.

Functionally, lytic polysaccharide monooxygenase (LPMO) that depolymerizes chitin via the oxidation of scissile beta-(1-4)-glycosidic bonds, yielding C1 or C4 oxidation products. Catalysis by LPMOs requires the reduction of the active-site copper from Cu(II) to Cu(I) by a reducing agent and H(2)O(2) or O(2) as a cosubstrate. Has considerable affinity for alpha-chitin and, more so, beta-chitin. Active toward both alpha-chitin and beta-chitin allomorphs and enhances chitin degradation by an endoacting chitinase, in particular for alpha-chitin, and so plays a role in fungal chitin turnover. The catalytic activity increases when supplying reactions with hydrogen peroxide, confirming that it has peroxygenase activity. Does not show activity on phosphoric acid-swollen cellulose (PASC), Avicel, tamarind xyloglucan, birchwood xylan, beechwood xylan, acetyl glucuronoxylan from aspen, ivory nut mannan, acetylated konjac glucomannan, potato starch, heparin, hyaluronic acid, and chitosan. The sequence is that of AA11 family lytic polysaccharide monooxygenase A from Aspergillus fumigatus (strain CBS 144.89 / FGSC A1163 / CEA10) (Neosartorya fumigata).